We begin with the raw amino-acid sequence, 276 residues long: Pantothenate synthetase (276 aa).

26-33 contacts ATP; that stretch reads MGFLHAGH. H33 functions as the Proton donor in the catalytic mechanism. A (R)-pantoate-binding site is contributed by Q57. Position 57 (Q57) interacts with beta-alanine. Position 143–146 (143–146) interacts with ATP; that stretch reads GQKD. Q149 is a (R)-pantoate binding site. Residues I172 and 180–183 contribute to the ATP site; that span reads MSSR.

It belongs to the pantothenate synthetase family. In terms of assembly, homodimer.

Its subcellular location is the cytoplasm. The enzyme catalyses (R)-pantoate + beta-alanine + ATP = (R)-pantothenate + AMP + diphosphate + H(+). The protein operates within cofactor biosynthesis; (R)-pantothenate biosynthesis; (R)-pantothenate from (R)-pantoate and beta-alanine: step 1/1. Catalyzes the condensation of pantoate with beta-alanine in an ATP-dependent reaction via a pantoyl-adenylate intermediate. This Herpetosiphon aurantiacus (strain ATCC 23779 / DSM 785 / 114-95) protein is Pantothenate synthetase.